The chain runs to 464 residues: Dolichyl-diphosphooligosaccharide--protein glycosyltransferase subunit 1B (464 aa).

The signal sequence occupies residues 1–24; that stretch reads MAARIGIFSVFVAVLLSISAFSSA. Residues 25 to 436 are Lumenal-facing; that stretch reads QDLQIVNAER…TFKPIYMLAE (412 aa). Residues N106 and N298 are each glycosylated (N-linked (GlcNAc...) asparagine). K310 is covalently cross-linked (Glycyl lysine isopeptide (Lys-Gly) (interchain with G-Cter in ubiquitin)). N352 carries an N-linked (GlcNAc...) asparagine glycan. A helical membrane pass occupies residues 437-457; sequence PFMLVSAFFLVFVASLAYVHI. Topologically, residues 458 to 464 are cytoplasmic; that stretch reads DLNIVRK.

The protein belongs to the OST1 family. Component of the oligosaccharyltransferase (OST) complex.

The protein localises to the endoplasmic reticulum membrane. The protein operates within protein modification; protein glycosylation. Functionally, subunit of the oligosaccharyl transferase (OST) complex that catalyzes the initial transfer of a defined glycan (Glc(3)Man(9)GlcNAc(2) in eukaryotes) from the lipid carrier dolichol-pyrophosphate to an asparagine residue within an Asn-X-Ser/Thr consensus motif in nascent polypeptide chains, the first step in protein N-glycosylation. N-glycosylation occurs cotranslationally and the complex associates with the Sec61 complex at the channel-forming translocon complex that mediates protein translocation across the endoplasmic reticulum (ER). All subunits are required for a maximal enzyme activity. The polypeptide is Dolichyl-diphosphooligosaccharide--protein glycosyltransferase subunit 1B (OST1B) (Arabidopsis thaliana (Mouse-ear cress)).